We begin with the raw amino-acid sequence, 611 residues long: Dihydroxy-acid dehydratase (611 aa).

D81 provides a ligand contact to Mg(2+). C122 contributes to the [2Fe-2S] cluster binding site. Positions 123 and 124 each coordinate Mg(2+). K124 carries the post-translational modification N6-carboxylysine. C195 contributes to the [2Fe-2S] cluster binding site. E491 lines the Mg(2+) pocket. The Proton acceptor role is filled by S517.

This sequence belongs to the IlvD/Edd family. In terms of assembly, homodimer. The cofactor is [2Fe-2S] cluster. Requires Mg(2+) as cofactor.

The enzyme catalyses (2R)-2,3-dihydroxy-3-methylbutanoate = 3-methyl-2-oxobutanoate + H2O. It catalyses the reaction (2R,3R)-2,3-dihydroxy-3-methylpentanoate = (S)-3-methyl-2-oxopentanoate + H2O. Its pathway is amino-acid biosynthesis; L-isoleucine biosynthesis; L-isoleucine from 2-oxobutanoate: step 3/4. It functions in the pathway amino-acid biosynthesis; L-valine biosynthesis; L-valine from pyruvate: step 3/4. In terms of biological role, functions in the biosynthesis of branched-chain amino acids. Catalyzes the dehydration of (2R,3R)-2,3-dihydroxy-3-methylpentanoate (2,3-dihydroxy-3-methylvalerate) into 2-oxo-3-methylpentanoate (2-oxo-3-methylvalerate) and of (2R)-2,3-dihydroxy-3-methylbutanoate (2,3-dihydroxyisovalerate) into 2-oxo-3-methylbutanoate (2-oxoisovalerate), the penultimate precursor to L-isoleucine and L-valine, respectively. The protein is Dihydroxy-acid dehydratase of Brucella melitensis biotype 1 (strain ATCC 23456 / CCUG 17765 / NCTC 10094 / 16M).